The chain runs to 287 residues: Nucleotide-binding protein Pmob_0154 (287 aa).

15-22 (GLSGAGKT) contacts ATP. 64–67 (DIRW) is a GTP binding site.

Belongs to the RapZ-like family.

Functionally, displays ATPase and GTPase activities. The sequence is that of Nucleotide-binding protein Pmob_0154 from Petrotoga mobilis (strain DSM 10674 / SJ95).